A 608-amino-acid chain; its full sequence is ATP-citrate synthase beta chain protein 2 (608 aa).

Residues 214-234 (ILRFNNIPQIKMMVVLGELGG) and 265-291 (FKSEVQFGHAGAKSGGEMESAQAKNQA) each bind ATP. Mg(2+) is bound at residue E231. The Tele-phosphohistidine intermediate role is filled by H273. 292–302 (LIDAGAIVPTS) is a binding site for CoA.

This sequence belongs to the succinate/malate CoA ligase alpha subunit family. Heterooctamer of 4 alpha and 4 beta chains. Expressed in trichomes, epidermal leaf cells, anther tapetal cells, stigma and in young vascular bundles of expanding leaves, cotyledons, roots, pedicel of flowers and siliques.

The protein localises to the cytoplasm. It localises to the cytosol. The catalysed reaction is oxaloacetate + acetyl-CoA + ADP + phosphate = citrate + ATP + CoA. Functionally, ATP citrate-lyase is the primary enzyme responsible for the synthesis of cytosolic acetyl-CoA, used for the elongation of fatty acids and biosynthesis of isoprenoids, flavonoids and malonated derivatives. May supply substrate to the cytosolic acetyl-CoA carboxylase, which generates the malonyl-CoA used for the synthesis of a multitude of compounds, including very long chain fatty acids and flavonoids. Required for normal growth and development and elongation of C18 fatty acids to C20 to C24 fatty acids in seeds. n contrast to all known animal ACL enzymes having a homomeric structure, plant ACLs are composed of alpha and beta chains. The chain is ATP-citrate synthase beta chain protein 2 from Arabidopsis thaliana (Mouse-ear cress).